The primary structure comprises 461 residues: Vitamin K-dependent protein C (461 aa).

An N-terminal signal peptide occupies residues methionine 1–glycine 18. The propeptide occupies valine 19–arginine 41. Residues alanine 42 to aspartate 87 enclose the Gla domain. Residues glutamate 47, glutamate 48, glutamate 55, glutamate 57, glutamate 60, glutamate 61, glutamate 66, glutamate 67, glutamate 70, and glutamate 76 each carry the 4-carboxyglutamate modification. Cysteine 58 and cysteine 63 are oxidised to a cystine. Disulfide bonds link cysteine 91–cysteine 110, cysteine 100–cysteine 105, cysteine 104–cysteine 119, cysteine 121–cysteine 130, cysteine 139–cysteine 150, cysteine 146–cysteine 159, cysteine 161–cysteine 174, cysteine 182–cysteine 320, and cysteine 239–cysteine 255. 2 EGF-like domains span residues leucine 96–glutamine 131 and glycine 135–arginine 175. Aspartate 112 bears the (3R)-3-hydroxyaspartate mark. The Peptidase S1 domain occupies isoleucine 213–glycine 450. Asparagine 215 carries N-linked (GlcNAc...) asparagine glycosylation. The active-site Charge relay system is histidine 254. N-linked (GlcNAc...) asparagine glycosylation occurs at asparagine 291. Aspartate 300 (charge relay system) is an active-site residue. An N-linked (GlcNAc...) asparagine glycan is attached at asparagine 355. 2 disulfides stabilise this stretch: cysteine 373–cysteine 387 and cysteine 398–cysteine 426. Residue serine 402 is the Charge relay system of the active site.

The protein belongs to the peptidase S1 family. In terms of assembly, synthesized as a single chain precursor, which is cleaved into a light chain and a heavy chain held together by a disulfide bond. The enzyme is then activated by thrombin, which cleaves a tetradecapeptide from the amino end of the heavy chain; this reaction, which occurs at the surface of endothelial cells, is strongly promoted by thrombomodulin. In terms of processing, the vitamin K-dependent, enzymatic carboxylation of some Glu residues allows the modified protein to bind calcium. The iron and 2-oxoglutarate dependent 3-hydroxylation of aspartate and asparagine is (R) stereospecific within EGF domains. Plasma; synthesized in the liver.

The protein localises to the secreted. It is found in the golgi apparatus. The protein resides in the endoplasmic reticulum. It carries out the reaction Degradation of blood coagulation factors Va and VIIIa.. In terms of biological role, protein C is a vitamin K-dependent serine protease that regulates blood coagulation by inactivating factors Va and VIIIa in the presence of calcium ions and phospholipids. Exerts a protective effect on the endothelial cell barrier function. In Rattus norvegicus (Rat), this protein is Vitamin K-dependent protein C (Proc).